The chain runs to 768 residues: DNA ligase (768 aa).

NAD(+)-binding positions include 61–65 (DAEFD), 110–111 (SL), and Glu-146. Lys-148 (N6-AMP-lysine intermediate) is an active-site residue. Arg-169, Glu-206, Lys-322, and Lys-346 together coordinate NAD(+). The Zn(2+) site is built by Cys-443, Cys-446, Cys-462, and Cys-468. The BRCT domain occupies 661-750 (SVPRTLEGLT…PAQTGTEAEA (90 aa)). The segment at 739 to 768 (NGPAQTGTEAEAATDEATVVDETAAEAATE) is disordered. Residues 746-768 (TEAEAATDEATVVDETAAEAATE) show a composition bias toward low complexity.

The protein belongs to the NAD-dependent DNA ligase family. LigA subfamily. Requires Mg(2+) as cofactor. Mn(2+) serves as cofactor.

It carries out the reaction NAD(+) + (deoxyribonucleotide)n-3'-hydroxyl + 5'-phospho-(deoxyribonucleotide)m = (deoxyribonucleotide)n+m + AMP + beta-nicotinamide D-nucleotide.. Functionally, DNA ligase that catalyzes the formation of phosphodiester linkages between 5'-phosphoryl and 3'-hydroxyl groups in double-stranded DNA using NAD as a coenzyme and as the energy source for the reaction. It is essential for DNA replication and repair of damaged DNA. The protein is DNA ligase of Paenarthrobacter aurescens (strain TC1).